Here is a 215-residue protein sequence, read N- to C-terminus: Urease accessory protein UreG (215 aa).

11-18 serves as a coordination point for GTP; that stretch reads GPVGAGKS.

Belongs to the SIMIBI class G3E GTPase family. UreG subfamily. Homodimer. UreD, UreF and UreG form a complex that acts as a GTP-hydrolysis-dependent molecular chaperone, activating the urease apoprotein by helping to assemble the nickel containing metallocenter of UreC. The UreE protein probably delivers the nickel.

It is found in the cytoplasm. Its function is as follows. Facilitates the functional incorporation of the urease nickel metallocenter. This process requires GTP hydrolysis, probably effectuated by UreG. This chain is Urease accessory protein UreG, found in Cenarchaeum symbiosum (strain A).